A 175-amino-acid chain; its full sequence is Large ribosomal subunit protein uL16 (175 aa).

Belongs to the universal ribosomal protein uL16 family.

The chain is Large ribosomal subunit protein uL16 from Metallosphaera sedula (strain ATCC 51363 / DSM 5348 / JCM 9185 / NBRC 15509 / TH2).